Reading from the N-terminus, the 713-residue chain is Phosphoribosylformylglycinamidine synthase subunit PurL (713 aa).

The active site involves H32. Y35 lines the ATP pocket. A Mg(2+)-binding site is contributed by E76. Residues 77 to 80 and R99 contribute to the substrate site; that span reads SHNH. The active-site Proton acceptor is the H78. A Mg(2+)-binding site is contributed by D100. Residue Q224 coordinates substrate. D252 contributes to the Mg(2+) binding site. A substrate-binding site is contributed by 296–298; it reads ESQ. ATP contacts are provided by D471 and G508. N509 contacts Mg(2+). Residue S511 participates in substrate binding.

It belongs to the FGAMS family. In terms of assembly, monomer. Part of the FGAM synthase complex composed of 1 PurL, 1 PurQ and 2 PurS subunits.

The protein localises to the cytoplasm. It carries out the reaction N(2)-formyl-N(1)-(5-phospho-beta-D-ribosyl)glycinamide + L-glutamine + ATP + H2O = 2-formamido-N(1)-(5-O-phospho-beta-D-ribosyl)acetamidine + L-glutamate + ADP + phosphate + H(+). It functions in the pathway purine metabolism; IMP biosynthesis via de novo pathway; 5-amino-1-(5-phospho-D-ribosyl)imidazole from N(2)-formyl-N(1)-(5-phospho-D-ribosyl)glycinamide: step 1/2. Functionally, part of the phosphoribosylformylglycinamidine synthase complex involved in the purines biosynthetic pathway. Catalyzes the ATP-dependent conversion of formylglycinamide ribonucleotide (FGAR) and glutamine to yield formylglycinamidine ribonucleotide (FGAM) and glutamate. The FGAM synthase complex is composed of three subunits. PurQ produces an ammonia molecule by converting glutamine to glutamate. PurL transfers the ammonia molecule to FGAR to form FGAM in an ATP-dependent manner. PurS interacts with PurQ and PurL and is thought to assist in the transfer of the ammonia molecule from PurQ to PurL. The polypeptide is Phosphoribosylformylglycinamidine synthase subunit PurL (Thermococcus kodakarensis (strain ATCC BAA-918 / JCM 12380 / KOD1) (Pyrococcus kodakaraensis (strain KOD1))).